Consider the following 136-residue polypeptide: Histone H3.1t (136 aa).

The segment at 1–43 is disordered; the sequence is MARTKQTARKSTGGKAPRKQLATKVARKSAPATGGVKKPHRYR. At R3 the chain carries Asymmetric dimethylarginine; by PRMT6; alternate. The residue at position 3 (R3) is a Citrulline; alternate. At T4 the chain carries Phosphothreonine; by HASPIN. Allysine; alternate is present on K5. At K5 the chain carries N6,N6,N6-trimethyllysine; alternate. Position 5 is an N6,N6-dimethyllysine; alternate (K5). The residue at position 5 (K5) is an N6-(2-hydroxyisobutyryl)lysine; alternate. K5 is subject to N6-(beta-hydroxybutyryl)lysine; alternate. At K5 the chain carries N6-acetyllysine; alternate. K5 carries the N6-methyllysine; alternate modification. Q6 is subject to 5-glutamyl dopamine; alternate. The residue at position 6 (Q6) is a 5-glutamyl serotonin; alternate. T7 is modified (phosphothreonine; by PKC). R9 carries the post-translational modification Citrulline; alternate. R9 bears the Symmetric dimethylarginine; by PRMT5; alternate mark. K10 carries the N6,N6,N6-trimethyllysine; alternate modification. N6,N6-dimethyllysine; alternate is present on K10. K10 carries the N6-(2-hydroxyisobutyryl)lysine; alternate modification. Position 10 is an N6-(beta-hydroxybutyryl)lysine; alternate (K10). K10 is modified (N6-acetyllysine; alternate). K10 carries the N6-methyllysine; alternate modification. K10 is modified (N6-lactoyllysine; alternate). At S11 the chain carries ADP-ribosylserine; alternate. Residue S11 is modified to Phosphoserine; alternate; by AURKB, AURKC, RPS6KA3, RPS6KA4 and RPS6KA5. T12 bears the Phosphothreonine; by PKC mark. K15 is modified (N6-(2-hydroxyisobutyryl)lysine; alternate). An N6-(beta-hydroxybutyryl)lysine; alternate modification is found at K15. N6-acetyllysine; alternate is present on K15. At K15 the chain carries N6-lactoyllysine; alternate. K15 is modified (N6-glutaryllysine; alternate). The residue at position 15 (K15) is an N6-succinyllysine; alternate. R18 bears the Citrulline; alternate mark. Residue R18 is modified to Asymmetric dimethylarginine; by CARM1; alternate. K19 and K24 each carry N6-(2-hydroxyisobutyryl)lysine; alternate. N6-(beta-hydroxybutyryl)lysine; alternate is present on residues K19 and K24. N6-acetyllysine; alternate is present on residues K19 and K24. 2 positions are modified to N6-methyllysine; alternate: K19 and K24. Residues K19 and K24 each carry the N6-lactoyllysine; alternate modification. N6-glutaryllysine; alternate is present on residues K19 and K24. An N6-butyryllysine; alternate mark is found at K19 and K24. A Citrulline modification is found at R27. At K28 the chain carries N6,N6,N6-trimethyllysine; alternate. An N6,N6-dimethyllysine; alternate modification is found at K28. At K28 the chain carries N6-(2-hydroxyisobutyryl)lysine; alternate. Position 28 is an N6-acetyllysine; alternate (K28). K28 is modified (N6-methyllysine; alternate). K28 bears the N6-lactoyllysine; alternate mark. Position 28 is an N6-glutaryllysine; alternate (K28). S29 carries the ADP-ribosylserine; alternate modification. A Phosphoserine; alternate; by AURKB, AURKC and RPS6KA5 modification is found at S29. Position 37 is an N6,N6,N6-trimethyllysine; alternate (K37). K37 carries the post-translational modification N6,N6-dimethyllysine; alternate. K37 is modified (N6-(2-hydroxyisobutyryl)lysine; alternate). At K37 the chain carries N6-acetyllysine; alternate. K37 bears the N6-methyllysine; alternate mark. K38 is subject to N6-methyllysine. A Phosphotyrosine modification is found at Y42. Residue K57 is modified to N6,N6,N6-trimethyllysine; alternate. K57 carries the N6-(2-hydroxyisobutyryl)lysine; alternate modification. The residue at position 57 (K57) is an N6-(beta-hydroxybutyryl)lysine; alternate. The residue at position 57 (K57) is an N6-acetyllysine; alternate. Position 57 is an N6-lactoyllysine; alternate (K57). Residue K57 is modified to N6-glutaryllysine; alternate. The residue at position 57 (K57) is an N6-succinyllysine; alternate. K57 bears the N6-methyllysine; by EHMT2; alternate mark. Phosphoserine is present on S58. Residues K65 and K80 each carry the N6-(2-hydroxyisobutyryl)lysine; alternate modification. N6-methyllysine; alternate occurs at positions 65 and 80. K80 carries the post-translational modification N6,N6,N6-trimethyllysine; alternate. N6,N6-dimethyllysine; alternate is present on K80. K80 carries the N6-acetyllysine; alternate modification. N6-lactoyllysine; alternate is present on K80. Residue K80 is modified to N6-glutaryllysine; alternate. N6-succinyllysine; alternate is present on K80. A Phosphothreonine modification is found at T81. S87 is subject to Phosphoserine. Position 108 is a phosphothreonine (T108). Residues K116 and K123 each carry the N6-acetyllysine; alternate modification. An N6-glutaryllysine; alternate mark is found at K116 and K123. K123 is subject to N6-(2-hydroxyisobutyryl)lysine; alternate. K123 carries the N6-methyllysine; alternate modification. At K123 the chain carries N6-succinyllysine; alternate.

Belongs to the histone H3 family. In terms of assembly, the nucleosome is a histone octamer containing two molecules each of H2A, H2B, H3 and H4 assembled in one H3-H4 heterotetramer and two H2A-H2B heterodimers. The octamer wraps approximately 147 bp of DNA. Interacts with TONSL; CHAF1A and CHAF1B. Acetylation is generally linked to gene activation. Acetylation on Lys-10 (H3K9ac) impairs methylation at Arg-9 (H3R8me2s). Acetylation on Lys-19 (H3K18ac) and Lys-24 (H3K24ac) favors methylation at Arg-18 (H3R17me). Acetylation at Lys-123 (H3K122ac) by EP300/p300 plays a central role in chromatin structure: localizes at the surface of the histone octamer and stimulates transcription, possibly by promoting nucleosome instability. In terms of processing, citrullination at Arg-9 (H3R8ci) and/or Arg-18 (H3R17ci) by PADI4 impairs methylation and represses transcription. Post-translationally, asymmetric dimethylation at Arg-18 (H3R17me2a) by CARM1 is linked to gene activation. Symmetric dimethylation at Arg-9 (H3R8me2s) by PRMT5 is linked to gene repression. Asymmetric dimethylation at Arg-3 (H3R2me2a) by PRMT6 is linked to gene repression and is mutually exclusive with H3 Lys-5 methylation (H3K4me2 and H3K4me3). H3R2me2a is present at the 3' of genes regardless of their transcription state and is enriched on inactive promoters, while it is absent on active promoters. Methylation at Lys-5 (H3K4me), Lys-37 (H3K36me) and Lys-80 (H3K79me) are linked to gene activation. Methylation at Lys-5 (H3K4me) facilitates subsequent acetylation of H3 and H4. Methylation at Lys-80 (H3K79me) is associated with DNA double-strand break (DSB) responses and is a specific target for TP53BP1. Methylation at Lys-10 (H3K9me) and Lys-28 (H3K27me) are linked to gene repression. Methylation at Lys-10 (H3K9me) is a specific target for HP1 proteins (CBX1, CBX3 and CBX5) and prevents subsequent phosphorylation at Ser-11 (H3S10ph) and acetylation of H3 and H4. Methylation at Lys-5 (H3K4me) and Lys-80 (H3K79me) require preliminary monoubiquitination of H2B at 'Lys-120'. Methylation at Lys-10 (H3K9me) and Lys-28 (H3K27me) are enriched in inactive X chromosome chromatin. Monomethylation at Lys-57 (H3K56me1) by EHMT2/G9A in G1 phase promotes interaction with PCNA and is required for DNA replication. In terms of processing, phosphorylated at Thr-4 (H3T3ph) by HASPIN during prophase and dephosphorylated during anaphase. Phosphorylation at Ser-11 (H3S10ph) by AURKB is crucial for chromosome condensation and cell-cycle progression during mitosis and meiosis. In addition phosphorylation at Ser-11 (H3S10ph) by RPS6KA4 and RPS6KA5 is important during interphase because it enables the transcription of genes following external stimulation, like mitogens, stress, growth factors or UV irradiation and result in the activation of genes, such as c-fos and c-jun. Phosphorylation at Ser-11 (H3S10ph), which is linked to gene activation, prevents methylation at Lys-10 (H3K9me) but facilitates acetylation of H3 and H4. Phosphorylation at Ser-11 (H3S10ph) by AURKB mediates the dissociation of HP1 proteins (CBX1, CBX3 and CBX5) from heterochromatin. Phosphorylation at Ser-11 (H3S10ph) is also an essential regulatory mechanism for neoplastic cell transformation. Phosphorylated at Ser-29 (H3S28ph) by MAP3K20 isoform 1, RPS6KA5 or AURKB during mitosis or upon ultraviolet B irradiation. Phosphorylation at Thr-7 (H3T6ph) by PRKCB is a specific tag for epigenetic transcriptional activation that prevents demethylation of Lys-5 (H3K4me) by LSD1/KDM1A. At centromeres, specifically phosphorylated at Thr-12 (H3T11ph) from prophase to early anaphase, by DAPK3 and PKN1. Phosphorylation at Thr-12 (H3T11ph) by PKN1 or isoform M2 of PKM (PKM2) is a specific tag for epigenetic transcriptional activation that promotes demethylation of Lys-10 (H3K9me) by KDM4C/JMJD2C. Phosphorylation at Tyr-42 (H3Y41ph) by JAK2 promotes exclusion of CBX5 (HP1 alpha) from chromatin. Post-translationally, ubiquitinated. Lysine deamination at Lys-5 (H3K4all) to form allysine is mediated by LOXL2. Allysine formation by LOXL2 only takes place on H3K4me3 and results in gene repression. In terms of processing, butyrylation of histones marks active promoters and competes with histone acetylation. It is present during late spermatogenesis. Post-translationally, succinylation at Lys-80 (H3K79succ) by KAT2A takes place with a maximum frequency around the transcription start sites of genes. It gives a specific tag for epigenetic transcription activation. Desuccinylation at Lys-123 (H3K122succ) by SIRT7 in response to DNA damage promotes chromatin condensation and double-strand breaks (DSBs) repair. Serine ADP-ribosylation constitutes the primary form of ADP-ribosylation of proteins in response to DNA damage. Serine ADP-ribosylation at Ser-11 (H3S10ADPr) is mutually exclusive with phosphorylation at Ser-11 (H3S10ph) and impairs acetylation at Lys-10 (H3K9ac). Expressed in testicular cells.

The protein resides in the nucleus. It is found in the chromosome. Its function is as follows. Core component of nucleosome. Nucleosomes wrap and compact DNA into chromatin, limiting DNA accessibility to the cellular machineries which require DNA as a template. Histones thereby play a central role in transcription regulation, DNA repair, DNA replication and chromosomal stability. DNA accessibility is regulated via a complex set of post-translational modifications of histones, also called histone code, and nucleosome remodeling. The polypeptide is Histone H3.1t (Homo sapiens (Human)).